The sequence spans 843 residues: Adenylate cyclase (843 aa).

A catalytic region spans residues 1-542; it reads MECNLAQAKQ…NLRQSFPSTI (542 aa). The regulatory stretch occupies residues 549-843; it reads SDLLNQCEIR…VPFKFRQMNK (295 aa).

Belongs to the adenylyl cyclase class-1 family.

Its subcellular location is the cytoplasm. It catalyses the reaction ATP = 3',5'-cyclic AMP + diphosphate. Plays an essential role in competence development. The chain is Adenylate cyclase (cyaA) from Haemophilus influenzae (strain ATCC 51907 / DSM 11121 / KW20 / Rd).